We begin with the raw amino-acid sequence, 503 residues long: Potassium voltage-gated channel subfamily V member 1 (503 aa).

Disordered regions lie at residues 1 to 20 and 171 to 192; these read MDLSPRNRPLLDSSSLDSGS and KKDTDDQESQHESEQDFSQGPC. At 3 to 213 the chain is on the cytoplasmic side; it reads LSPRNRPLLD…EKPGSSTAAR (211 aa). A compositionally biased stretch (low complexity) spans 10-20; the sequence is LLDSSSLDSGS. A compositionally biased stretch (basic and acidic residues) spans 171-184; the sequence is KKDTDDQESQHESE. The chain crosses the membrane as a helical span at residues 214–234; it reads IFGVISIIFVAVSIVNMALMS. At 235 to 241 the chain is on the extracellular side; the sequence is AELSWLN. A helical membrane pass occupies residues 242 to 262; sequence LQLLEILEYVCISWFTGEFIL. Over 263–279 the chain is Cytoplasmic; sequence RFLCVKDRCHFLRKVPN. The helical transmembrane segment at 280 to 300 threads the bilayer; that stretch reads IIDLLAILPFYITLLVESLSG. Topologically, residues 301 to 312 are extracellular; the sequence is SHTTQELENVGR. The chain crosses the membrane as a helical; Voltage-sensor span at residues 313-334; that stretch reads LVQVLRLLRALRMLKLGRHSTG. The Cytoplasmic segment spans residues 335–348; that stretch reads LRSLGMTITQCYEE. A helical transmembrane segment spans residues 349-369; sequence VGLLLLFLSVGISIFSTIEYF. The Selectivity filter signature appears at 395 to 400; the sequence is TVGYGD. The chain crosses the membrane as a helical span at residues 410–430; the sequence is IVAFMCILSGILVLALPIAII. Residues 431–503 are Cytoplasmic-facing; sequence NDRFSACYFT…RSSGGDDFWF (73 aa).

The protein belongs to the potassium channel family. V (TC 1.A.1.2) subfamily. Kv8.1/KCNV1 sub-subfamily. Heteromultimer with KCNB1 and KCNB2. Interacts with KCNC4 and KCND1. In terms of tissue distribution, detected in brain, in neocortex, olfactory tubercle, hippocampus, dentate gyrus, piriform cortex and amygdala. Detected in Purkinje cells and granular cells of the cerebellum, in hippocampal CA4 neurons and neocortex pyramidal cells.

The protein resides in the cell membrane. Potassium channel subunit that does not form functional channels by itself. Modulates KCNB1 and KCNB2 channel activity by shifting the threshold for inactivation to more negative values and by slowing the rate of inactivation. Can down-regulate the channel activity of KCNB1, KCNB2, KCNC4 and KCND1, possibly by trapping them in intracellular membranes. The polypeptide is Potassium voltage-gated channel subfamily V member 1 (Kcnv1) (Rattus norvegicus (Rat)).